A 250-amino-acid chain; its full sequence is 1-(5-phosphoribosyl)-5-[(5-phosphoribosylamino)methylideneamino] imidazole-4-carboxamide isomerase (250 aa).

The Proton acceptor role is filled by D8. D131 functions as the Proton donor in the catalytic mechanism.

Belongs to the HisA/HisF family.

It is found in the cytoplasm. It carries out the reaction 1-(5-phospho-beta-D-ribosyl)-5-[(5-phospho-beta-D-ribosylamino)methylideneamino]imidazole-4-carboxamide = 5-[(5-phospho-1-deoxy-D-ribulos-1-ylimino)methylamino]-1-(5-phospho-beta-D-ribosyl)imidazole-4-carboxamide. It functions in the pathway amino-acid biosynthesis; L-histidine biosynthesis; L-histidine from 5-phospho-alpha-D-ribose 1-diphosphate: step 4/9. The polypeptide is 1-(5-phosphoribosyl)-5-[(5-phosphoribosylamino)methylideneamino] imidazole-4-carboxamide isomerase (Paraburkholderia phytofirmans (strain DSM 17436 / LMG 22146 / PsJN) (Burkholderia phytofirmans)).